Here is a 450-residue protein sequence, read N- to C-terminus: UDP-N-acetylmuramoylalanine--D-glutamate ligase (450 aa).

Residue 119–125 (GSNGKTT) participates in ATP binding.

This sequence belongs to the MurCDEF family.

The protein resides in the cytoplasm. It carries out the reaction UDP-N-acetyl-alpha-D-muramoyl-L-alanine + D-glutamate + ATP = UDP-N-acetyl-alpha-D-muramoyl-L-alanyl-D-glutamate + ADP + phosphate + H(+). Its pathway is cell wall biogenesis; peptidoglycan biosynthesis. Cell wall formation. Catalyzes the addition of glutamate to the nucleotide precursor UDP-N-acetylmuramoyl-L-alanine (UMA). The protein is UDP-N-acetylmuramoylalanine--D-glutamate ligase of Streptococcus sanguinis (strain SK36).